The primary structure comprises 90 residues: DNA-directed RNA polymerase subunit omega (90 aa).

A disordered region spans residues 69-90; it reads RQEQQEQEAAELAAVSSIARNR.

Belongs to the RNA polymerase subunit omega family. As to quaternary structure, the RNAP catalytic core consists of 2 alpha, 1 beta, 1 beta' and 1 omega subunit. When a sigma factor is associated with the core the holoenzyme is formed, which can initiate transcription.

It catalyses the reaction RNA(n) + a ribonucleoside 5'-triphosphate = RNA(n+1) + diphosphate. Functionally, promotes RNA polymerase assembly. Latches the N- and C-terminal regions of the beta' subunit thereby facilitating its interaction with the beta and alpha subunits. This is DNA-directed RNA polymerase subunit omega from Vibrio vulnificus (strain CMCP6).